Here is a 548-residue protein sequence, read N- to C-terminus: Sulochrin halogenase gedL (548 aa).

FAD-binding residues include G14, A17, and E47. Chloride is bound by residues S333 and G334. V335 contributes to the FAD binding site.

This sequence belongs to the flavin-dependent halogenase family.

The enzyme catalyses sulochrin + 2 FADH2 + 2 chloride + 2 O2 = dihydrogeodin + 2 FAD + 4 H2O + H(+). The protein operates within secondary metabolite biosynthesis. Sulochrin halogenase; part of the gene cluster that mediates the biosynthesis of geodin, an intermediate in the biosynthesis of other natural products. The pathway begins with the synthesis of atrochrysone thioester by the polyketide synthase (PKS) gedC. The atrochrysone carboxyl ACP thioesterase gedB then breaks the thioester bond and releases the atrochrysone carboxylic acid from gedC. The atrochrysone carboxylic acid is then converted to atrochrysone which is further transformed into emodinanthrone. The next step is performed by the emodinanthrone oxygenase gedH that catalyzes the oxidation of emodinanthrone to emodin. Emodin O-methyltransferase encoded probably by gedA then catalyzes methylation of the 8-hydroxy group of emodin to form questin. Ring cleavage of questin by questin oxidase gedK leads to desmethylsulochrin via several intermediates including questin epoxide. Another methylation step probably catalyzed by methyltransferase gedG leads to the formation of sulochrin which is further converted to dihydrogeodin by the sulochrin halogenase gedL. Finally, the dihydrogeodin oxidase gedJ catalyzes the stereospecific phenol oxidative coupling reaction converting dihydrogeodin to geodin. The polypeptide is Sulochrin halogenase gedL (Aspergillus terreus (strain NIH 2624 / FGSC A1156)).